Reading from the N-terminus, the 663-residue chain is UvrABC system protein B (663 aa).

Positions 26–414 (DGLESGLAKQ…DNVAEQVVRP (389 aa)) constitute a Helicase ATP-binding domain. Residue 39-46 (GVTGSGKT) participates in ATP binding. Residues 92–115 (YYDYYQPEAYVPASDTFIEKDASI) carry the Beta-hairpin motif. The region spanning 430-596 (QVDDLMSEIR…GINKSVEDIL (167 aa)) is the Helicase C-terminal domain. One can recognise a UVR domain in the interval 624 to 659 (AKEINALEKQMYAHAQNMEFELAAKIRDEYLLLKEQ).

This sequence belongs to the UvrB family. As to quaternary structure, forms a heterotetramer with UvrA during the search for lesions. Interacts with UvrC in an incision complex.

The protein resides in the cytoplasm. In terms of biological role, the UvrABC repair system catalyzes the recognition and processing of DNA lesions. A damage recognition complex composed of 2 UvrA and 2 UvrB subunits scans DNA for abnormalities. Upon binding of the UvrA(2)B(2) complex to a putative damaged site, the DNA wraps around one UvrB monomer. DNA wrap is dependent on ATP binding by UvrB and probably causes local melting of the DNA helix, facilitating insertion of UvrB beta-hairpin between the DNA strands. Then UvrB probes one DNA strand for the presence of a lesion. If a lesion is found the UvrA subunits dissociate and the UvrB-DNA preincision complex is formed. This complex is subsequently bound by UvrC and the second UvrB is released. If no lesion is found, the DNA wraps around the other UvrB subunit that will check the other stand for damage. The polypeptide is UvrABC system protein B (Legionella pneumophila (strain Paris)).